The sequence spans 888 residues: Rab GTPase-activating protein eat-17 (888 aa).

Residues 41–60 are compositionally biased toward low complexity; it reads RSNSNSTSSPRNSPSQLSPP. Disordered stretches follow at residues 41–87 and 104–135; these read RSNS…CETG and LNKS…HSPE. Residues 114–123 show a composition bias toward polar residues; it reads SVASKKTGSS. Positions 124–133 are enriched in basic and acidic residues; the sequence is ESRKGAREHS. The Rab-GAP TBC domain occupies 173-357; that stretch reads GIPQHFRMIA…RIMDCFLVEG (185 aa). A disordered region spans residues 631–654; the sequence is ASIEKESTSEAHSTQQQPSPPLTS. Residues 694-770 are a coiled coil; sequence EADTLAELKE…ESEFNEGRIN (77 aa). Residues 854 to 888 are disordered; the sequence is LAEEGSATETDELRPKELNDGNDTTDSGVQLSDSH. Over residues 874-888 the composition is skewed to polar residues; it reads GNDTTDSGVQLSDSH.

As to quaternary structure, may interact with rab-6.2 (in GTP-bound form). As to expression, highly expressed in the terminal bulb muscles, pharyngeal muscle, in intestine and vulva.

Functionally, rab GTPase activating protein for the small GTPase rab-6.2. Required for grinder formation, which is the feeding organ that breaks down food. This is Rab GTPase-activating protein eat-17 from Caenorhabditis elegans.